We begin with the raw amino-acid sequence, 594 residues long: NADH-quinone oxidoreductase subunit C/D (594 aa).

Residues 1–185 form an NADH dehydrogenase I subunit C region; it reads MTTGSALYIP…DPFSLNLAKQ (185 aa). Residues 209–594 are NADH dehydrogenase I subunit D; the sequence is DYMFLNLGPN…IDFVMADVDR (386 aa).

It in the N-terminal section; belongs to the complex I 30 kDa subunit family. This sequence in the C-terminal section; belongs to the complex I 49 kDa subunit family. As to quaternary structure, NDH-1 is composed of 13 different subunits. Subunits NuoB, CD, E, F, and G constitute the peripheral sector of the complex.

It localises to the cell inner membrane. The enzyme catalyses a quinone + NADH + 5 H(+)(in) = a quinol + NAD(+) + 4 H(+)(out). NDH-1 shuttles electrons from NADH, via FMN and iron-sulfur (Fe-S) centers, to quinones in the respiratory chain. The immediate electron acceptor for the enzyme in this species is believed to be ubiquinone. Couples the redox reaction to proton translocation (for every two electrons transferred, four hydrogen ions are translocated across the cytoplasmic membrane), and thus conserves the redox energy in a proton gradient. This Pseudomonas fluorescens (strain SBW25) protein is NADH-quinone oxidoreductase subunit C/D.